The chain runs to 440 residues: Ribosomal protein uS12 methylthiotransferase RimO (440 aa).

The 111-residue stretch at 6-116 folds into the MTTase N-terminal domain; it reads PKVGFVSLGC…VVTAVHEVVP (111 aa). The [4Fe-4S] cluster site is built by cysteine 15, cysteine 51, cysteine 80, cysteine 149, cysteine 153, and cysteine 156. Residues 135 to 373 form the Radical SAM core domain; sequence LTPRHYAYLK…MAHQQAISAA (239 aa). A TRAM domain is found at 376-440; the sequence is QLKVGKEIEV…DEYDLWAELV (65 aa).

This sequence belongs to the methylthiotransferase family. RimO subfamily. The cofactor is [4Fe-4S] cluster.

It is found in the cytoplasm. The catalysed reaction is L-aspartate(89)-[ribosomal protein uS12]-hydrogen + (sulfur carrier)-SH + AH2 + 2 S-adenosyl-L-methionine = 3-methylsulfanyl-L-aspartate(89)-[ribosomal protein uS12]-hydrogen + (sulfur carrier)-H + 5'-deoxyadenosine + L-methionine + A + S-adenosyl-L-homocysteine + 2 H(+). Catalyzes the methylthiolation of an aspartic acid residue of ribosomal protein uS12. In Pseudomonas aeruginosa (strain UCBPP-PA14), this protein is Ribosomal protein uS12 methylthiotransferase RimO.